Here is a 264-residue protein sequence, read N- to C-terminus: V-type proton ATPase subunit D (264 aa).

Basic and acidic residues predominate over residues 214–230 (RDNAETDAQMKAKKAEQ). A disordered region spans residues 214–264 (RDNAETDAQMKAKKAEQQRLALADSENAEGEQTENTPADILAAEEDEDVIF). Acidic residues predominate over residues 255–264 (AAEEDEDVIF).

It belongs to the V-ATPase D subunit family. As to quaternary structure, V-ATPase is a heteromultimeric enzyme composed of a peripheral catalytic V1 complex (components A to H) attached to an integral membrane V0 proton pore complex (components: a, c, c', c'', d, e, f and VOA1).

The protein resides in the vacuole membrane. Functionally, subunit of the V1 complex of vacuolar(H+)-ATPase (V-ATPase), a multisubunit enzyme composed of a peripheral complex (V1) that hydrolyzes ATP and a membrane integral complex (V0) that translocates protons. V-ATPase is responsible for acidifying and maintaining the pH of intracellular compartments. In Neurospora crassa (strain ATCC 24698 / 74-OR23-1A / CBS 708.71 / DSM 1257 / FGSC 987), this protein is V-type proton ATPase subunit D (vma-8).